The following is a 382-amino-acid chain: Mannitol-1-phosphate 5-dehydrogenase (382 aa).

3 to 14 (AIHFGAGNIGRG) is a binding site for NAD(+).

It belongs to the mannitol dehydrogenase family.

The enzyme catalyses D-mannitol 1-phosphate + NAD(+) = beta-D-fructose 6-phosphate + NADH + H(+). The protein is Mannitol-1-phosphate 5-dehydrogenase of Psychromonas ingrahamii (strain DSM 17664 / CCUG 51855 / 37).